Here is a 183-residue protein sequence, read N- to C-terminus: Ras-like protein (183 aa).

Position 10–17 (10–17) interacts with GTP; sequence GAGGVGKS. Residues 32 to 40 carry the Effector region motif; that stretch reads YDPTIEDSY. GTP is bound by residues 57 to 61 and 116 to 119; these read DTAGQ and NKCD.

Belongs to the small GTPase superfamily. Ras family.

The protein localises to the cell membrane. It carries out the reaction GTP + H2O = GDP + phosphate + H(+). Alternates between an inactive form bound to GDP and an active form bound to GTP. Activated by a guanine nucleotide-exchange factor (GEF) and inactivated by a GTPase-activating protein (GAP). Its function is as follows. Ras proteins bind GDP/GTP and possess intrinsic GTPase activity. This chain is Ras-like protein, found in Carassius auratus (Goldfish).